The following is a 499-amino-acid chain: Aspartyl/glutamyl-tRNA(Asn/Gln) amidotransferase subunit B (499 aa).

Belongs to the GatB/GatE family. GatB subfamily. As to quaternary structure, heterotrimer of A, B and C subunits.

The enzyme catalyses L-glutamyl-tRNA(Gln) + L-glutamine + ATP + H2O = L-glutaminyl-tRNA(Gln) + L-glutamate + ADP + phosphate + H(+). It carries out the reaction L-aspartyl-tRNA(Asn) + L-glutamine + ATP + H2O = L-asparaginyl-tRNA(Asn) + L-glutamate + ADP + phosphate + 2 H(+). In terms of biological role, allows the formation of correctly charged Asn-tRNA(Asn) or Gln-tRNA(Gln) through the transamidation of misacylated Asp-tRNA(Asn) or Glu-tRNA(Gln) in organisms which lack either or both of asparaginyl-tRNA or glutaminyl-tRNA synthetases. The reaction takes place in the presence of glutamine and ATP through an activated phospho-Asp-tRNA(Asn) or phospho-Glu-tRNA(Gln). This chain is Aspartyl/glutamyl-tRNA(Asn/Gln) amidotransferase subunit B, found in Salinispora arenicola (strain CNS-205).